Reading from the N-terminus, the 1074-residue chain is Collagen, type I, alpha 1a (1074 aa).

Positions 1 to 13 (KSPAMPVPGPMGP) are enriched in pro residues. Residues 1-1010 (KSPAMPVPGP…PQEKAPDPYR (1010 aa)) form a disordered region. The span at 14-36 (MGPRSGPQGFPGEAGAAGAMGPR) shows a compositional bias: low complexity. The span at 45-59 (NGEDGESGKPGRGGE) shows a compositional bias: basic and acidic residues. The segment covering 129-147 (TGAAGAAGARGNDGAAGAA) has biased composition (low complexity). Pro residues predominate over residues 149–162 (PPGPTGPAGPPGFP). The span at 163–181 (GGPGAKGDAGAQGGRGPEG) shows a compositional bias: gly residues. Composition is skewed to low complexity over residues 182–225 (PAGA…AGAP), 234–272 (SGPQ…APGV), and 290–299 (EPGAAGARGA). Residues 301 to 313 (GERGGPGGRGFPG) show a composition bias toward gly residues. Low complexity-rich tracts occupy residues 377-392 (VGAR…PGPK), 469-530 (VPGE…QGMP), and 563-578 (RGLT…AGAT). The segment covering 588–597 (GPVGPGGARG) has biased composition (gly residues). Low complexity-rich tracts occupy residues 611-647 (AGFA…AGPT) and 661-683 (PKGA…AGRV). Residues 685-697 (PPGPSGNPGPPGP) show a composition bias toward pro residues. 2 stretches are compositionally biased toward low complexity: residues 715–742 (PAGR…SEGA) and 803–823 (PGLA…SEGS). Residues 847 to 857 (APGPPGAPGPV) are compositionally biased toward pro residues. Low complexity predominate over residues 871–890 (PAGPAGSAGPAGPRGPAGAP). Residues 893–907 (RGDKGESGEAGERGH) show a composition bias toward basic and acidic residues. The span at 920 to 956 (SGSSGEQGPAGAAGPAGPRGPAGSAGSPGKDGMSGLP) shows a compositional bias: low complexity. The span at 974–986 (AGPPGPPGPPGAP) shows a compositional bias: pro residues. The Fibrillar collagen NC1 domain occupies 1014–1074 (LEVDSTLKSL…GLEVGPVCFL (61 aa)).

The protein belongs to the fibrillar collagen family.

The protein resides in the secreted. Its subcellular location is the extracellular space. The protein localises to the extracellular matrix. This chain is Collagen, type I, alpha 1a, found in Epinephelus marginatus (Dusky grouper).